The chain runs to 286 residues: MHTQKAITEALQKLGVQSGDLLMVHASLKSIGPVEGGAETVVAALRSAVGPTGTVMGYASWDRSPYEETLNGARLDDNARRTWPPFDPATAGTYRGFGLLNQFLVQAPGARRSAHPDASMVAVGPLAETLTEPHELGHALGEGSPNERFVRLGGKALLLGAPLNSVTALHYAEAVADIPNKRWVTYEMPMPGRDGEVAWKTASDYDSNGILDCFAIEGKQDAVETIANAYVKLGRHREGVVGFAQCYLFDAQDIVTFGVTYLEKHFGTTPIVPAHEAIERSCEPSG.

The protein belongs to the antibiotic N-acetyltransferase family.

It catalyses the reaction a 2-deoxystreptamine antibiotic + acetyl-CoA = an N(3)-acetyl-2-deoxystreptamine antibiotic + CoA + H(+). Its function is as follows. Resistance to antibiotics containing the 2-deoxy-streptamine ring including gentamicin, kanamycin, tobramycin, neomycin and apramycin. The chain is Aminoglycoside N(3)-acetyltransferase III (aacC3) from Salmonella sp.